We begin with the raw amino-acid sequence, 840 residues long: MTQELKSKLLSFFKFIFATALFIFVIFTLYRELSHINFKETFIQFGKINRLWLVLLFAGGGLSLILLSLYDIILVKALKLKMPLIRVFRVSYIINALNSIIGFGGFIGAGVRAFVYKNYTNDTKKLVQYISIILVSMLTGLSLLSILVVLRIFNASHMIDEISWVRWILYIVALFLPIFIFYTVARPVDRNNRYMGVYCTVVSCVEWMAAATVLYFAALIVDIHISFMTFVGIFVIAALSGLVSFIPGGFGAFDLVVLLGLKSLGISEEKILLALVLYRFAYYFVPVMIALILSSFEFGNTAKKYLDNSKYFIPVKDFTSFLRSYQKDILAKVPSFSLAILIFLTSIIFFINNLTIVYDGLYDGNHFAYYIALAIQTSACLLLILNVRGIYKGSRRAIIYAFISIILIASATIYTYASFLLLSWLIIIFVLLILAYQRAQVLKRPLRFKKLAFMLLLSIFILYLNHILISGTLYALDVYHIEIDTSLLRYYFWMTIVIIMLLVGVIAWLFDYKYKRPHHSIDLTLCDAIIQKYGGNYLSHLVYSGDKDCFFNENKDSFIMYRYKSNALVVLGDPIGNTKSFESLLEAFYQFAEYQGYEIIFYQISDQYMPLYHNFGNQFFKLGEEAIIDLTTFTTSGKKRRGFRATLNKFDDLNINFEIIEPPFTQDFFDELKFVSDKWLDGRSEMHFSVGQFTQTYLSKAPIGVMRDHSGKMIAFCSLMPTYSNNAISVDLIRWLPELDLPLMDGLYLHMLLWSKEKGYKAFNMGMATLSNVGQLHYSYLRERMAGRVFEHFNGLYRFQGLRRYKEKYSPNWEPRFLVYQKHYSLWESMLKVMRVIRHK.

Residues 1–8 (MTQELKSK) lie on the Cytoplasmic side of the membrane. Residues 9 to 29 (LLSFFKFIFATALFIFVIFTL) form a helical membrane-spanning segment. The Extracellular segment spans residues 30–52 (YRELSHINFKETFIQFGKINRLW). A helical membrane pass occupies residues 53–73 (LVLLFAGGGLSLILLSLYDII). The Cytoplasmic portion of the chain corresponds to 74 to 89 (LVKALKLKMPLIRVFR). The helical transmembrane segment at 90 to 110 (VSYIINALNSIIGFGGFIGAG) threads the bilayer. Over 111 to 129 (VRAFVYKNYTNDTKKLVQY) the chain is Extracellular. Residues 130 to 150 (ISIILVSMLTGLSLLSILVVL) traverse the membrane as a helical segment. Residues 151–161 (RIFNASHMIDE) lie on the Cytoplasmic side of the membrane. The helical transmembrane segment at 162–182 (ISWVRWILYIVALFLPIFIFY) threads the bilayer. Residues 183–200 (TVARPVDRNNRYMGVYCT) lie on the Extracellular side of the membrane. Residues 201 to 221 (VVSCVEWMAAATVLYFAALIV) traverse the membrane as a helical segment. Residues 222-229 (DIHISFMT) are Cytoplasmic-facing. A helical transmembrane segment spans residues 230–250 (FVGIFVIAALSGLVSFIPGGF). Topologically, residues 251–270 (GAFDLVVLLGLKSLGISEEK) are extracellular. A helical membrane pass occupies residues 271–291 (ILLALVLYRFAYYFVPVMIAL). At 292–337 (ILSSFEFGNTAKKYLDNSKYFIPVKDFTSFLRSYQKDILAKVPSFS) the chain is on the cytoplasmic side. The chain crosses the membrane as a helical span at residues 338-358 (LAILIFLTSIIFFINNLTIVY). The Extracellular segment spans residues 359–366 (DGLYDGNH). The chain crosses the membrane as a helical span at residues 367 to 387 (FAYYIALAIQTSACLLLILNV). The Cytoplasmic segment spans residues 388–392 (RGIYK). A helical membrane pass occupies residues 393 to 413 (GSRRAIIYAFISIILIASATI). The Extracellular portion of the chain corresponds to 414-415 (YT). Residues 416-436 (YASFLLLSWLIIIFVLLILAY) form a helical membrane-spanning segment. Residues 437-450 (QRAQVLKRPLRFKK) lie on the Cytoplasmic side of the membrane. The helical transmembrane segment at 451–471 (LAFMLLLSIFILYLNHILISG) threads the bilayer. The Extracellular segment spans residues 472–489 (TLYALDVYHIEIDTSLLR). The helical transmembrane segment at 490–510 (YYFWMTIVIIMLLVGVIAWLF) threads the bilayer. The Cytoplasmic segment spans residues 511–840 (DYKYKRPHHS…LKVMRVIRHK (330 aa)).

The protein belongs to the LPG synthase family.

The protein localises to the cell membrane. The enzyme catalyses L-lysyl-tRNA(Lys) + a 1,2-diacyl-sn-glycero-3-phospho-(1'-sn-glycerol) = a 1,2-diacyl-sn-glycero-3-phospho-1'-(3'-O-L-lysyl)-sn-glycerol + tRNA(Lys). In terms of biological role, catalyzes the transfer of a lysyl group from L-lysyl-tRNA(Lys) to membrane-bound phosphatidylglycerol (PG), which produces lysylphosphatidylglycerol (LPG), a major component of the bacterial membrane with a positive net charge. LPG synthesis contributes to bacterial virulence as it is involved in the resistance mechanism against cationic antimicrobial peptides (CAMP) produces by the host's immune system (defensins, cathelicidins) and by the competing microorganisms (bacteriocins). In fact, the modification of anionic phosphatidylglycerol with positively charged L-lysine results in repulsion of the peptides. This chain is Phosphatidylglycerol lysyltransferase (mprF), found in Staphylococcus epidermidis (strain ATCC 35984 / DSM 28319 / BCRC 17069 / CCUG 31568 / BM 3577 / RP62A).